The primary structure comprises 261 residues: Syntaxin-7 (261 aa).

Serine 2 is modified (N-acetylserine). The Cytoplasmic segment spans residues 2–238 (SYTPGVGGDP…DYQRKSRKTL (237 aa)). Threonine 4 is subject to Phosphothreonine. Phosphoserine is present on serine 45. The stretch at 47–69 (ELRQQLQQKQQYTNQLAKETDKY) forms a coiled coil. Phosphoserine is present on serine 75. Residue threonine 79 is modified to Phosphothreonine. A phosphoserine mark is found at serine 125, serine 126, serine 129, and serine 205. The disordered stretch occupies residues 129–148 (SGSFPEDSSKERNLVSWESQ). A t-SNARE coiled-coil homology domain is found at 165–227 (LRLIHERESS…QQANQQLSRA (63 aa)). Residues 239 to 259 (CIIILILVIGVAIISLIIWGL) form a helical; Anchor for type IV membrane protein membrane-spanning segment. The Vesicular segment spans residues 260 to 261 (NH).

Belongs to the syntaxin family. In terms of assembly, forms a SNARE complex with VTI1B, STX8 and VAMP8 which functions in the homotypic fusion of late endosomes. Component of the SNARE complex composed of STX7, STX8, VAMP7 and VTI1B that is required for heterotypic fusion of late endosomes with lysosomes. Interacts with VPS11, VPS16 and VPS18. Interacts with VPS33A. Interacts with TPC1. Highest expression is found in placenta followed by heart, skeletal muscle, kidney and brain. Low expression is found in pancreas, lung and liver.

It localises to the early endosome membrane. Functionally, may be involved in protein trafficking from the plasma membrane to the early endosome (EE) as well as in homotypic fusion of endocytic organelles. Mediates the endocytic trafficking from early endosomes to late endosomes and lysosomes. The protein is Syntaxin-7 (STX7) of Homo sapiens (Human).